The chain runs to 221 residues: Vesicle transport v-SNARE 11 (221 aa).

The residue at position 2 (S2) is an N-acetylserine. Residues 2 to 198 are Cytoplasmic-facing; that stretch reads SDVFDGYERQ…MTRRMNKNKW (197 aa). Positions 32–93 form a coiled coil; that stretch reads EQKKQKLSEI…FKTEVKRITS (62 aa). A helical; Anchor for type IV membrane protein transmembrane segment spans residues 199–219; sequence TIGAIIIALIAAIFIILYFKL. Topologically, residues 220 to 221 are vesicular; sequence TK.

The protein belongs to the VTI1 family. As to quaternary structure, forms SNARE complexes with the t-SNAREs SYP51 and either SYP21 or SYP22 in the PVC, and with a much lower affinity with SYP61 in the TGN. Does not interact with SYP41, SYP42 or VPS45. Binds to EPSIN1. Interacts with SCYL2B. Expressed in roots, stems, flowers and leaves.

Its subcellular location is the golgi apparatus. It is found in the trans-Golgi network membrane. The protein localises to the prevacuolar compartment membrane. The protein resides in the vacuole membrane. Functions as a v-SNARE responsible for targeting AtELP-containing vesicles from the trans-Golgi network (TGN) to the prevacuolar compartment (PVC) and mediates liposome fusion. May be also involved in retrograde traffic to the cis-Golgi. Promotes the formation of vacuolar membrane 'bulbs'. Necessary to deliver proteins to the lytic vacuole, but seems not involved in storage proteins transport. Required for amyloplast sedimentation in the endodermis during shoot gravitropism, which are thus acting as statoliths. Expression in the endodermis is essential for the shoot gravitropic response, whereas expression in other tissues may be responsible for the correct stem and leaf shape. The chain is Vesicle transport v-SNARE 11 from Arabidopsis thaliana (Mouse-ear cress).